A 269-amino-acid polypeptide reads, in one-letter code: Tryptophan synthase alpha chain (269 aa).

Catalysis depends on proton acceptor residues Glu49 and Asp60.

The protein belongs to the TrpA family. Tetramer of two alpha and two beta chains.

The catalysed reaction is (1S,2R)-1-C-(indol-3-yl)glycerol 3-phosphate + L-serine = D-glyceraldehyde 3-phosphate + L-tryptophan + H2O. It functions in the pathway amino-acid biosynthesis; L-tryptophan biosynthesis; L-tryptophan from chorismate: step 5/5. The alpha subunit is responsible for the aldol cleavage of indoleglycerol phosphate to indole and glyceraldehyde 3-phosphate. The protein is Tryptophan synthase alpha chain of Actinobacillus pleuropneumoniae serotype 7 (strain AP76).